The chain runs to 419 residues: METPKPRILPWLVSQLDLGQLEGVAWLDESRTRFRIPWKHGLRQDAQMADFGIFQAWAEASGAYTPGKDKPDVSTWKRNFRSALNRKEVLRLAADNSKDPYDPHKVYEFVTPGARDFVHLGASPDTNGKSSLPHSQENLPKLFDGLILGPLKDEGSSDLAIVSDPSQQLPSPNVNNFLNPAPQENPLKQLLAEEQWEFEVTAFYRGRQVFQQTLFCPGGLRLVGSTADMTLPWQPVTLPDPEGFLTDKLVKEYVGQVLKGLGNGLALWQAGQCLWAQRLGHSHAFWALGEELLPDSGRGPDGEVHKDKDGAVFDLRPFVADLIAFMEGSGHSPRYTLWFCMGEMWPQDQPWVKRLVMVKVVPTCLKELLEMAREGGASSLKTVDLHISNSQPISLTSDQYKAYLQDLVEDMDFQATGNI.

At T3 the chain carries Phosphothreonine. The segment at residues 5 to 111 (KPRILPWLVS…DPHKVYEFVT (107 aa)) is a DNA-binding region (IRF tryptophan pentad repeat). S14 is modified (phosphoserine). A Phosphothreonine modification is found at T75. Phosphoserine is present on residues S97, S123, and S135. Residues 140–419 (PKLFDGLILG…DMDFQATGNI (280 aa)) are mediates interaction with ZDHHC11. K188 is covalently cross-linked (Glycyl lysine isopeptide (Lys-Gly) (interchain with G-Cter in ISG15)). The interaction with HERC5 stretch occupies residues 194–353 (EQWEFEVTAF…MWPQDQPWVK (160 aa)). 3 positions are modified to phosphothreonine: T230, T237, and T246. Glycyl lysine isopeptide (Lys-Gly) (interchain with G-Cter in ISG15) cross-links involve residues K353 and K359. At K359 the chain carries N6-acetyllysine. The residue at position 378 (S378) is a Phosphoserine. S379 carries the post-translational modification Diphosphoserine. Phosphoserine; by TBK1 is present on S379. S388 is modified (phosphoserine; by IKKE). The residue at position 390 (S390) is a Phosphoserine. T396 bears the Phosphothreonine mark.

This sequence belongs to the IRF family. In terms of assembly, monomer. Homodimer; phosphorylation-induced. Interacts (when phosphorylated) with CREBBP. Interacts with MAVS (via phosphorylated pLxIS motif). Interacts with TICAM1 (via phosphorylated pLxIS motif). Interacts with STING1 (via phosphorylated pLxIS motif). Interacts with IKBKE and TBK1. Interacts with TICAM2. Interacts with RBCK1. Interacts with HERC5. Interacts with DDX3X; the interaction allows the phosphorylation and activation of IRF3 by IKBKE. Interacts with TRIM21 and ULK1, in the presence of TRIM21; this interaction leads to IRF3 degradation by autophagy. Interacts with RIOK3; RIOK3 probably mediates the interaction of TBK1 with IRF3. Interacts with ILRUN; the interaction inhibits IRF3 binding to its DNA consensus sequence. Interacts with LYAR; this interaction impairs IRF3 DNA-binding activity. Interacts with TRAF3. Interacts with ZDHHC11; ZDHHC11 recruits IRF3 to STING1 upon DNA virus infection and thereby promotes IRF3 activation. Interacts with HSP90AA1; the interaction mediates IRF3 association with TOMM70. Interacts with BCL2; the interaction decreases upon Sendai virus infection. Interacts with BAX; the interaction is direct, increases upon virus infection and mediates the formation of the apoptosis complex TOMM70:HSP90AA1:IRF3:BAX. Interacts with DDX56. Interacts with NBR1. Post-translationally, constitutively phosphorylated on many Ser/Thr residues. Activated following phosphorylation by TBK1 and IKBKE. Innate adapter proteins, such as MAVS, STING1 or TICAM1, are first activated by viral RNA, cytosolic DNA, and bacterial lipopolysaccharide (LPS), respectively, leading to activation of the kinases TBK1 and IKBKE. These kinases then phosphorylate the adapter proteins on the pLxIS motif, leading to recruitment of IRF3, thereby licensing IRF3 for phosphorylation by TBK1. Phosphorylation at Ser-379 is followed by pyrophosphorylation at the same residue, promoting phosphorylation at Ser-388. Phosphorylated IRF3 dissociates from the adapter proteins, dimerizes, and then enters the nucleus to induce IFNs. Pyrophosphorylated by UAP1 following phosphorylation at Ser-379 by TBK1. Pyrophosphorylation promotes subsequent phosphorylation at Ser-388, leading to homodimerization of IRF3. In terms of processing, acetylation at Lys-359 by KAT8 inhibits recruimtent to promoters and transcription factor activity. Acetylation by KAT8 is promoted by phosphorylation at Ser-388. Post-translationally, ubiquitinated; ubiquitination involves RBCK1 leading to proteasomal degradation. Polyubiquitinated; ubiquitination involves TRIM21 leading to proteasomal degradation. Ubiquitinated by UBE3C, leading to its degradation. Deubiquitinated by USP5 on both 'Lys-48'-linked unanchored and 'Lys-63'-linked anchored polyubiquitin, leading to inhibition of anti-RNA viral innate immunity. ISGylated by HERC5 resulting in sustained IRF3 activation and in the inhibition of IRF3 ubiquitination by disrupting PIN1 binding. The phosphorylation state of IRF3 does not alter ISGylation. In terms of processing, proteolytically cleaved by apoptotic caspases during apoptosis, leading to its inactivation. Cleavage by CASP3 during virus-induced apoptosis inactivates it, preventing cytokine overproduction.

Its subcellular location is the cytoplasm. It localises to the nucleus. The protein localises to the mitochondrion. In the absence of viral infection, maintained as a monomer in an autoinhibited state. Phosphorylation by TBK1 and IKBKE disrupts this autoinhibition leading to the liberation of the DNA-binding and dimerization activities and its nuclear localization where it can activate type I IFN and ISG genes. Phosphorylation and activation follow the following steps: innate adapter proteins, such as MAVS, STING1 or TICAM1, are first activated by viral RNA, cytosolic DNA and bacterial lipopolysaccharide (LPS), respectively, leading to activation of the kinases TBK1 and IKBKE. These kinases then phosphorylate the adapter proteins on their pLxIS motif, leading to recruitment of IRF3, thereby licensing IRF3 for phosphorylation by TBK1. Phosphorylated IRF3 dissociates from the adapter proteins, dimerizes, and then enters the nucleus to induce IFNs. Key transcriptional regulator of type I interferon (IFN)-dependent immune responses which plays a critical role in the innate immune response against DNA and RNA viruses. Regulates the transcription of type I IFN genes (IFN-alpha and IFN-beta) and IFN-stimulated genes (ISG) by binding to an interferon-stimulated response element (ISRE) in their promoters. Acts as a more potent activator of the IFN-beta (IFNB) gene than the IFN-alpha (IFNA) gene and plays a critical role in both the early and late phases of the IFNA/B gene induction. Found in an inactive form in the cytoplasm of uninfected cells and following viral infection, double-stranded RNA (dsRNA), or toll-like receptor (TLR) signaling, is phosphorylated by IKBKE and TBK1 kinases. This induces a conformational change, leading to its dimerization and nuclear localization and association with CREB binding protein (CREBBP) to form dsRNA-activated factor 1 (DRAF1), a complex which activates the transcription of the type I IFN and ISG genes. Can activate distinct gene expression programs in macrophages and can induce significant apoptosis in primary macrophages. The polypeptide is Interferon regulatory factor 3 (Irf3) (Mus musculus (Mouse)).